The chain runs to 181 residues: Protein Syd (181 aa).

This sequence belongs to the Syd family.

It is found in the cell inner membrane. Its function is as follows. Interacts with the SecY protein in vivo. May bind preferentially to an uncomplexed state of SecY, thus functioning either as a chelating agent for excess SecY in the cell or as a regulatory factor that negatively controls the translocase function. The protein is Protein Syd of Escherichia coli O157:H7.